The primary structure comprises 251 residues: MSKAMSCEPTPWRATVLTLFPEMFPGPLGVSLAGRALATGLWALEVRDIRDSATDKHRSVDDTPAGGGPGMVLRADVLAAAIDAADAGETRPRLVMSPRGRPLTQAKVAELAAGPGPLIVCGRFEGIDQRVIDARDLEEVSIGDYVLSGGEIAALALLDACVRLLPGVMGKQGSALEESFSDGLLEYPQYTRPQLFEERPIPEILTSGDHAKVAAWRRAEAEKLTRARRPDLFATRPQPNRQKPPKNTTDG.

S-adenosyl-L-methionine-binding positions include glycine 122 and 142-147 (IGDYVL). The disordered stretch occupies residues 226 to 251 (RARRPDLFATRPQPNRQKPPKNTTDG). The segment covering 237–251 (PQPNRQKPPKNTTDG) has biased composition (polar residues).

The protein belongs to the RNA methyltransferase TrmD family. In terms of assembly, homodimer.

The protein localises to the cytoplasm. The enzyme catalyses guanosine(37) in tRNA + S-adenosyl-L-methionine = N(1)-methylguanosine(37) in tRNA + S-adenosyl-L-homocysteine + H(+). In terms of biological role, specifically methylates guanosine-37 in various tRNAs. This is tRNA (guanine-N(1)-)-methyltransferase from Rhodopseudomonas palustris (strain BisB18).